A 157-amino-acid chain; its full sequence is Large ribosomal subunit protein uL3 (157 aa).

Residues 57–98 are disordered; it reads GKGFAGSIKRHNQSRGPESHGSRYHRRPGSMGPIKGKLKGKK.

The protein belongs to the universal ribosomal protein uL3 family. Part of the 50S ribosomal subunit. Forms a cluster with proteins L14 and L19.

Functionally, one of the primary rRNA binding proteins, it binds directly near the 3'-end of the 23S rRNA, where it nucleates assembly of the 50S subunit. The polypeptide is Large ribosomal subunit protein uL3 (rplC) (Onion yellows phytoplasma (strain OY-M)).